The following is a 265-amino-acid chain: Palmitoyltransferase ZDHHC21 (265 aa).

Residues 1–16 (MGLRIHFVVDPHGWCC) are Cytoplasmic-facing. Residues 17–37 (MGLIVFVWLYNIVLIPKIVLF) form a helical membrane-spanning segment. Topologically, residues 38 to 44 (PHYEEGH) are extracellular. A helical transmembrane segment spans residues 45 to 65 (IPGILIIIFYGISIFCLVALV). The Cytoplasmic portion of the chain corresponds to 66-133 (RASITDPGRL…NNCVGEDNHW (68 aa)). Residues 90 to 140 (ELCNKCNLMRPKRSHHCSRCGHCVRRMDHHCPWINNCVGEDNHWLFLQLCF) form the DHHC domain. The active-site S-palmitoyl cysteine intermediate is cysteine 120. Residues 134-154 (LFLQLCFYTELLTCYALMFSF) traverse the membrane as a helical segment. The Extracellular segment spans residues 155–185 (CHYYYFLPLKKRNLDLFVFRHELAIMRLAAF). Residues 186–206 (MGITMLVGITGLFYTQLIGII) form a helical membrane-spanning segment. Topologically, residues 207–265 (TDTTSIEKMSNCCEDISRPRKPWQQTFSEVFGTRWKILWFIPFRQRQPLRVPYHFANHV) are cytoplasmic.

The protein belongs to the DHHC palmitoyltransferase family. As to expression, widely expressed.

The protein resides in the golgi apparatus membrane. It localises to the golgi apparatus. Its subcellular location is the cis-Golgi network membrane. It is found in the cell membrane. The enzyme catalyses L-cysteinyl-[protein] + hexadecanoyl-CoA = S-hexadecanoyl-L-cysteinyl-[protein] + CoA. Palmitoyltransferase that catalyzes the addition of palmitate onto various protein substrates. Palmitoylates sex steroid hormone receptors, including ESR1, PGR and AR, thereby regulating their targeting to the plasma membrane. This affects rapid intracellular signaling by sex hormones via ERK and AKT kinases and the generation of cAMP, but does not affect that mediated by their nuclear receptor. Palmitoylates FYN, regulates its localization in hair follicles and plays a key role in epidermal homeostasis and hair follicle differentiation. Through the palmitoylation of PLCB1 and the regulation of PLCB1 downstream signaling may indirectly regulate the function of the endothelial barrier and the adhesion of leukocytes to the endothelium. Also has a palmitoyltransferase activity toward ADRA1D, positively regulating its activity and expression and may thereby play a role in vascular contraction. May also palmitoylate eNOS and LCK. This is Palmitoyltransferase ZDHHC21 from Homo sapiens (Human).